A 102-amino-acid chain; its full sequence is UPF0147 protein MTH_1407 (102 aa).

It belongs to the UPF0147 family.

The chain is UPF0147 protein MTH_1407 from Methanothermobacter thermautotrophicus (strain ATCC 29096 / DSM 1053 / JCM 10044 / NBRC 100330 / Delta H) (Methanobacterium thermoautotrophicum).